The primary structure comprises 558 residues: Serine/threonine-protein phosphatase 2B catalytic subunit (558 aa).

Fe cation-binding residues include D128, H130, and D156. Zn(2+)-binding residues include D156 and N188. The active-site Proton donor is H189. The Zn(2+) site is built by H237 and H319. 2 disordered regions span residues 415–439 (LRED…NQDP) and 534–558 (ALER…LSTS). Residues 420–435 (ATTSPGSASPALPSAA) show a composition bias toward low complexity. The segment covering 534 to 548 (ALERATREADNDKKL) has biased composition (basic and acidic residues). Polar residues predominate over residues 549-558 (QTLSRRLSTS).

This sequence belongs to the PPP phosphatase family. PP-2B subfamily. Composed of two components (A and B), the A component is the catalytic subunit and the B component confers calcium sensitivity. Fe(3+) serves as cofactor. It depends on Zn(2+) as a cofactor.

It catalyses the reaction O-phospho-L-seryl-[protein] + H2O = L-seryl-[protein] + phosphate. The enzyme catalyses O-phospho-L-threonyl-[protein] + H2O = L-threonyl-[protein] + phosphate. Functionally, calcium-dependent, calmodulin-stimulated protein phosphatase. This subunit may have a role in the calmodulin activation of calcineurin. The chain is Serine/threonine-protein phosphatase 2B catalytic subunit (cna-1) from Neurospora crassa (strain ATCC 24698 / 74-OR23-1A / CBS 708.71 / DSM 1257 / FGSC 987).